The chain runs to 2166 residues: Protein TIC236, chloroplastic (2166 aa).

Residues 1–37 (MSLRLQNPFLSTPLLHGSFNRREKRINVARRAFRSKR) constitute a chloroplast transit peptide. Over 38 to 101 (IYSEKKQNDW…RSLAPVWEEG (64 aa)) the chain is Stromal. Residues 102–122 (LFFLRCSVFFAVISGVCLLVW) traverse the membrane as a helical segment. Residues 123–2166 (YGQNKARVFV…LFEYSATSQD (2044 aa)) are Chloroplast intermembrane-facing. The segment at 1611–1649 (MSEGEVSETDRGGAVKIPSWAKEKEDDEKRTSRDRSEER) is disordered. Over residues 1631 to 1649 (AKEKEDDEKRTSRDRSEER) the composition is skewed to basic and acidic residues.

The protein belongs to the TamB family. Part of the TIC complex, which can interact with components of the TOC complex to form a larger import complex. Interacts with the TOC complex component TOC75-3.

The protein resides in the plastid. The protein localises to the chloroplast inner membrane. It localises to the chloroplast intermembrane space. Functionally, part of the inner chloroplast membrane translocon complex (TIC) which associates with the outer chloroplast membrane translocon complex (TOC) and forms a supercomplex involved in protein precursor import into the chloroplast stroma. Required for the import of HSP93, TIC40 and RBCS protein precursors in the chloroplast stroma. Links the outer and inner membrane translocons of the chloroplast envelope. The chain is Protein TIC236, chloroplastic from Arabidopsis thaliana (Mouse-ear cress).